The chain runs to 133 residues: Cytochrome b5 (133 aa).

Residues 4–86 form the Cytochrome b5 heme-binding domain; it reads EKEYILDEIS…LKNYLVGNFK (83 aa). Residues His-45 and His-69 each coordinate heme. Residues 108 to 128 form a helical membrane-spanning segment; the sequence is SGTGIMLIVLMALFAIAYGYY.

The protein belongs to the cytochrome b5 family. Interacts with alternative squalene epoxidase PHATRDRAFT_45494.

It is found in the endoplasmic reticulum membrane. Hemoprotein that functions as an electron carrier for membrane bound monooxygenases involved in sterol biosynthesis. This is Cytochrome b5 from Phaeodactylum tricornutum (strain CCAP 1055/1).